A 207-amino-acid chain; its full sequence is Small ribosomal subunit protein uS4 (207 aa).

Residues 29–38 (QDKAKFDSKP) are compositionally biased toward basic and acidic residues. The disordered stretch occupies residues 29–54 (QDKAKFDSKPGQHGRTSGQRTSDYGL). Residues 42–52 (GRTSGQRTSDY) show a composition bias toward polar residues. The S4 RNA-binding domain maps to 97–160 (SRLDNVVYRM…KKQTRIAEAL (64 aa)).

This sequence belongs to the universal ribosomal protein uS4 family. Part of the 30S ribosomal subunit. Contacts protein S5. The interaction surface between S4 and S5 is involved in control of translational fidelity.

Functionally, one of the primary rRNA binding proteins, it binds directly to 16S rRNA where it nucleates assembly of the body of the 30S subunit. Its function is as follows. With S5 and S12 plays an important role in translational accuracy. This chain is Small ribosomal subunit protein uS4, found in Variovorax paradoxus (strain S110).